A 126-amino-acid chain; its full sequence is Large ribosomal subunit protein bL17 (126 aa).

The protein belongs to the bacterial ribosomal protein bL17 family. In terms of assembly, part of the 50S ribosomal subunit. Contacts protein L32.

The polypeptide is Large ribosomal subunit protein bL17 (Aliivibrio fischeri (strain ATCC 700601 / ES114) (Vibrio fischeri)).